The following is a 141-amino-acid chain: Nucleoside diphosphate kinase (141 aa).

The ATP site is built by Lys-11, Phe-59, Arg-87, Thr-93, Arg-104, and Asn-114. The active-site Pros-phosphohistidine intermediate is His-117.

It belongs to the NDK family. Homotetramer. Requires Mg(2+) as cofactor.

The protein localises to the cytoplasm. The catalysed reaction is a 2'-deoxyribonucleoside 5'-diphosphate + ATP = a 2'-deoxyribonucleoside 5'-triphosphate + ADP. It catalyses the reaction a ribonucleoside 5'-diphosphate + ATP = a ribonucleoside 5'-triphosphate + ADP. Its function is as follows. Major role in the synthesis of nucleoside triphosphates other than ATP. The ATP gamma phosphate is transferred to the NDP beta phosphate via a ping-pong mechanism, using a phosphorylated active-site intermediate. This is Nucleoside diphosphate kinase from Pseudomonas putida (strain GB-1).